The sequence spans 312 residues: MDIIFYHPTFDTQWWIEALRKAIPQARVRAWKSGDNDPADYALVWHPPVEMLAGRDLKAVFALGAGVDSILSKLKAHPEMLKPSVPLFRLEDTGMGEQMQEYAVSQVLHWFRRFDDYRIQQNSSHWQPLPEYHREDFTIGILGAGVLGSKVAQSLQTWRFPLRCWSRTRKSWSGVQSFAGREELSAFLSQCRVLINLLPNTPETVGIINQQLIEKLPDGAYLLNLARGVHVVEDDLLAALDSGKVKGAMLDVFNREPLPPESPLWLHPRVAITPHVAAITRPAEAVEYISRTIAQLEKGERVCGQVDRARGY.

Residue arginine 227 is part of the active site. The active-site Proton donor is histidine 275.

It belongs to the D-isomer specific 2-hydroxyacid dehydrogenase family. GhrA subfamily.

The protein resides in the cytoplasm. It carries out the reaction glycolate + NADP(+) = glyoxylate + NADPH + H(+). The enzyme catalyses (R)-glycerate + NAD(+) = 3-hydroxypyruvate + NADH + H(+). It catalyses the reaction (R)-glycerate + NADP(+) = 3-hydroxypyruvate + NADPH + H(+). Catalyzes the NADPH-dependent reduction of glyoxylate and hydroxypyruvate into glycolate and glycerate, respectively. This is Glyoxylate/hydroxypyruvate reductase A from Escherichia coli O17:K52:H18 (strain UMN026 / ExPEC).